Reading from the N-terminus, the 980-residue chain is Valine--tRNA ligase (980 aa).

The 'HIGH' region signature appears at 43–53 (PNVTGTLHMGH). A 'KMSKS' region motif is present at residues 586-590 (KMSKS). Lys-589 contacts ATP. Positions 914 to 980 (LVDMDAERMR…AGLREQRGKL (67 aa)) form a coiled coil.

The protein belongs to the class-I aminoacyl-tRNA synthetase family. ValS type 1 subfamily. Monomer.

It localises to the cytoplasm. The enzyme catalyses tRNA(Val) + L-valine + ATP = L-valyl-tRNA(Val) + AMP + diphosphate. Catalyzes the attachment of valine to tRNA(Val). As ValRS can inadvertently accommodate and process structurally similar amino acids such as threonine, to avoid such errors, it has a 'posttransfer' editing activity that hydrolyzes mischarged Thr-tRNA(Val) in a tRNA-dependent manner. This chain is Valine--tRNA ligase, found in Xanthomonas oryzae pv. oryzae (strain PXO99A).